The following is a 666-amino-acid chain: Probable potassium transport system protein Kup (666 aa).

The next 12 membrane-spanning stretches (helical) occupy residues 16–36 (GFII…LYTI), 58–78 (ISLI…LIAL), 100–120 (PWLI…GALT), 141–161 (IYQN…VLFG), 165–185 (FGTG…FSFL), 221–241 (IFIL…YSDL), 253–273 (WPFV…WILA), 294–314 (VYLV…LISG), 343–363 (LYIP…VLAF), 373–393 (YGLA…YYLI), 399–419 (PILA…FFLA), and 424–444 (FMHG…VMFI).

The protein belongs to the HAK/KUP transporter (TC 2.A.72) family.

Its subcellular location is the cell membrane. It catalyses the reaction K(+)(in) + H(+)(in) = K(+)(out) + H(+)(out). Transport of potassium into the cell. Likely operates as a K(+):H(+) symporter. The sequence is that of Probable potassium transport system protein Kup from Streptococcus pyogenes serotype M1.